The following is a 377-amino-acid chain: Protein FAM199X-B (377 aa).

The span at 240 to 254 (KEHSPRQRCTRESWK) shows a compositional bias: basic and acidic residues. Residues 240–350 (KEHSPRQRCT…EQRQARKERI (111 aa)) are disordered. Over residues 256–301 (TSYSTASTSGVSGASVSSSSASMVSTASSTGSSGGNSASNSSANMS) the composition is skewed to low complexity. Residues 319–338 (DSKKRSKQRKLQQKALRKRQ) are compositionally biased toward basic residues. The stretch at 321 to 349 (KKRSKQRKLQQKALRKRQLKEQRQARKER) forms a coiled coil. Basic and acidic residues predominate over residues 339-350 (LKEQRQARKERI).

It belongs to the FAM199 family.

The polypeptide is Protein FAM199X-B (fam199x-b) (Xenopus laevis (African clawed frog)).